The sequence spans 442 residues: Protein translocase subunit SecY (442 aa).

The next 10 helical transmembrane spans lie at 29-49 (LITI…VPDI), 69-89 (IFTG…LPYI), 126-146 (YIAF…LLRP), 153-173 (PLFI…VMWI), 182-202 (IGNG…PQTL), 217-237 (ITAV…IVFV), 274-294 (VMPI…AGFA), 320-340 (VYTV…ASLI), 377-397 (LTFL…FVEQ), and 400-420 (GVTT…GVAI).

The protein belongs to the SecY/SEC61-alpha family. Component of the Sec protein translocase complex. Heterotrimer consisting of SecY, SecE and SecG subunits. The heterotrimers can form oligomers, although 1 heterotrimer is thought to be able to translocate proteins. Interacts with the ribosome. Interacts with SecDF, and other proteins may be involved. Interacts with SecA.

The protein localises to the cell inner membrane. Its subcellular location is the cellular thylakoid membrane. The central subunit of the protein translocation channel SecYEG. Consists of two halves formed by TMs 1-5 and 6-10. These two domains form a lateral gate at the front which open onto the bilayer between TMs 2 and 7, and are clamped together by SecE at the back. The channel is closed by both a pore ring composed of hydrophobic SecY resides and a short helix (helix 2A) on the extracellular side of the membrane which forms a plug. The plug probably moves laterally to allow the channel to open. The ring and the pore may move independently. In Synechocystis sp. (strain ATCC 27184 / PCC 6803 / Kazusa), this protein is Protein translocase subunit SecY.